Here is a 160-residue protein sequence, read N- to C-terminus: Invasion protein IagB (160 aa).

An N-terminal signal peptide occupies residues 1–19 (MHYFFIIVIWLLSINTAWA).

It belongs to the IagB/IpgF/P19 family.

The sequence is that of Invasion protein IagB (iagB) from Salmonella typhi.